We begin with the raw amino-acid sequence, 88 residues long: Small ribosomal subunit protein bS20 (88 aa).

This sequence belongs to the bacterial ribosomal protein bS20 family.

Functionally, binds directly to 16S ribosomal RNA. This chain is Small ribosomal subunit protein bS20, found in Micrococcus luteus (strain ATCC 4698 / DSM 20030 / JCM 1464 / CCM 169 / CCUG 5858 / IAM 1056 / NBRC 3333 / NCIMB 9278 / NCTC 2665 / VKM Ac-2230) (Micrococcus lysodeikticus).